The sequence spans 404 residues: Tyrosine--tRNA ligase (404 aa).

The short motif at Pro45–His54 is the 'HIGH' region element. A 'KMSKS' region motif is present at residues Lys229–Ser233. An ATP-binding site is contributed by Lys232. In terms of domain architecture, S4 RNA-binding spans Ile342–Phe402.

Belongs to the class-I aminoacyl-tRNA synthetase family. TyrS type 2 subfamily. Homodimer.

It is found in the cytoplasm. It catalyses the reaction tRNA(Tyr) + L-tyrosine + ATP = L-tyrosyl-tRNA(Tyr) + AMP + diphosphate + H(+). Functionally, catalyzes the attachment of tyrosine to tRNA(Tyr) in a two-step reaction: tyrosine is first activated by ATP to form Tyr-AMP and then transferred to the acceptor end of tRNA(Tyr). The protein is Tyrosine--tRNA ligase of Acinetobacter baylyi (strain ATCC 33305 / BD413 / ADP1).